A 164-amino-acid chain; its full sequence is Phosphopantetheine adenylyltransferase (164 aa).

Ser9 provides a ligand contact to substrate. ATP-binding positions include 9–10 (SF) and His17. Residues Lys41, Val78, and Arg92 each contribute to the substrate site. Residues 93 to 95 (GLR), Glu103, and 128 to 134 (SRPITAT) each bind ATP.

Belongs to the bacterial CoaD family. Homohexamer. Mg(2+) serves as cofactor.

Its subcellular location is the cytoplasm. It carries out the reaction (R)-4'-phosphopantetheine + ATP + H(+) = 3'-dephospho-CoA + diphosphate. It participates in cofactor biosynthesis; coenzyme A biosynthesis; CoA from (R)-pantothenate: step 4/5. Reversibly transfers an adenylyl group from ATP to 4'-phosphopantetheine, yielding dephospho-CoA (dPCoA) and pyrophosphate. The sequence is that of Phosphopantetheine adenylyltransferase from Rhizobium leguminosarum bv. trifolii (strain WSM2304).